The chain runs to 262 residues: tRNA 4-demethylwyosine(37)-methyltransferase Taw21 (262 aa).

S-adenosyl-L-methionine is bound by residues His108, Phe125, 148–149, and 175–176; these read DL and DA.

It belongs to the class I-like SAM-binding methyltransferase superfamily. TRM5/TYW2 family.

The protein resides in the cytoplasm. The catalysed reaction is 4-demethylwyosine(37) in tRNA(Phe) + S-adenosyl-L-methionine = isowyosine(37) in tRNA(Phe) + S-adenosyl-L-homocysteine + H(+). Catalyzes the C7-methylation of 4-demethylwyosine (imG-14) at position 37 in tRNA(Phe). The chain is tRNA 4-demethylwyosine(37)-methyltransferase Taw21 from Saccharolobus solfataricus (strain ATCC 35092 / DSM 1617 / JCM 11322 / P2) (Sulfolobus solfataricus).